Reading from the N-terminus, the 239-residue chain is SKA complex subunit 1 (239 aa).

Positions 87–115 (PDSVPQKSTRPCLDDEKEGSSVVQPPESG) are disordered. The microtubule binding stretch occupies residues 116–239 (NRHVQLISEQ…RCGPLTFYYA (124 aa)).

It belongs to the SKA1 family. Component of the SKA complex, composed of two copies of ska-1 and a single copy of ska-3. The core complex associates with microtubules and may form dimeric assemblies. Interacts with ska-3 and microtubules.

The protein resides in the cytoplasm. Its subcellular location is the cytoskeleton. The protein localises to the spindle. It is found in the chromosome. It localises to the centromere. The protein resides in the kinetochore. Its function is as follows. Component of the SKA complex, a microtubule plus end-binding complex of the outer kinetochore that stabilizes spindle microtubule-kinetochore attachments, promotes alignment of chromosomes at the mitotic spindle equator (chromosome congression) and assists suppression of the spindle assembly checkpoint. Kinetochores, consisting of a centromere-associated inner segment and a microtubule-contacting outer segment, play a crucial role in chromosome segregation by mediating the physical connection between centromeric DNA and spindle microtubules. The outer kinetochore is made up of the ten-subunit KMN network complex, comprising the MIS12, NDC80 and KNL1 complexes, and auxiliary microtubule-associated components such as the SKA complex; together they connect the outer kinetochore with the inner kinetochore, bind microtubules, and mediate interactions with mitotic checkpoint proteins that delay anaphase until chromosomes are bioriented on the spindle. The SKA complex is loaded onto bioriented kinetochores and it facilitates chromosome congression by stabilizing microtubules and end-on attachment of the NDC80 complex to depolymerizing spindle microtubules, thereby assisting the poleward-moving kinetochore in withstanding microtubule pulling forces. The complex associates with dynamic microtubule plus-ends and can track both depolymerizing and elongating microtubules. The complex recruits protein phosphatase 1 (PP1) to the kinetochore in prometaphase and metaphase, to oppose spindle assembly checkpoint signaling and promote the onset of anaphase. In the complex, it mediates interactions with microtubules. During meiosis the SKA complex stabilizes the meiotic spindle and is required for its migration to the cortex. This Caenorhabditis briggsae protein is SKA complex subunit 1.